Here is a 734-residue protein sequence, read N- to C-terminus: Photosystem I P700 chlorophyll a apoprotein A2 (734 aa).

The next 8 membrane-spanning stretches (helical) occupy residues Ile46 to Ala69, Leu135 to Gln158, Leu175 to Ile199, Ile273 to Tyr291, Ile330 to Tyr353, Ala369 to Ile395, Ala417 to His439, and Phe517 to Val535. [4Fe-4S] cluster contacts are provided by Cys559 and Cys568. The next 2 helical transmembrane spans lie at Ala575–Trp596 and Leu643–Ile665. Residues His654, Met662, and Tyr670 each coordinate chlorophyll a. Trp671 provides a ligand contact to phylloquinone. Residues Leu707–Ala727 traverse the membrane as a helical segment.

Belongs to the PsaA/PsaB family. In terms of assembly, the PsaA/B heterodimer binds the P700 chlorophyll special pair and subsequent electron acceptors. PSI consists of a core antenna complex that captures photons, and an electron transfer chain that converts photonic excitation into a charge separation. The eukaryotic PSI reaction center is composed of at least 11 subunits. It depends on P700 is a chlorophyll a/chlorophyll a' dimer, A0 is one or more chlorophyll a, A1 is one or both phylloquinones and FX is a shared 4Fe-4S iron-sulfur center. as a cofactor.

Its subcellular location is the plastid. It localises to the chloroplast thylakoid membrane. The enzyme catalyses reduced [plastocyanin] + hnu + oxidized [2Fe-2S]-[ferredoxin] = oxidized [plastocyanin] + reduced [2Fe-2S]-[ferredoxin]. PsaA and PsaB bind P700, the primary electron donor of photosystem I (PSI), as well as the electron acceptors A0, A1 and FX. PSI is a plastocyanin-ferredoxin oxidoreductase, converting photonic excitation into a charge separation, which transfers an electron from the donor P700 chlorophyll pair to the spectroscopically characterized acceptors A0, A1, FX, FA and FB in turn. Oxidized P700 is reduced on the lumenal side of the thylakoid membrane by plastocyanin. This chain is Photosystem I P700 chlorophyll a apoprotein A2, found in Gossypium hirsutum (Upland cotton).